We begin with the raw amino-acid sequence, 193 residues long: Signal peptidase I (193 aa).

The Cytoplasmic portion of the chain corresponds to 1–25 (MTEEQKPTSEKSVKRKSNTYWEWGK). A helical membrane pass occupies residues 26 to 42 (AIIIAVALALLIRHFLF). Topologically, residues 43–193 (EPYLVEGSSM…FPFHDMRQTK (151 aa)) are extracellular. Active-site residues include serine 51 and lysine 93.

This sequence belongs to the peptidase S26 family.

The protein localises to the cell membrane. It carries out the reaction Cleavage of hydrophobic, N-terminal signal or leader sequences from secreted and periplasmic proteins.. This Bacillus amyloliquefaciens (Bacillus velezensis) protein is Signal peptidase I (sipS2).